The primary structure comprises 157 residues: 3-dehydroquinate dehydratase (157 aa).

Catalysis depends on Y29, which acts as the Proton acceptor. Positions 80, 86, and 93 each coordinate substrate. H107 functions as the Proton donor in the catalytic mechanism. Substrate-binding positions include 108 to 109 (IS) and R118.

It belongs to the type-II 3-dehydroquinase family. In terms of assembly, homododecamer.

It carries out the reaction 3-dehydroquinate = 3-dehydroshikimate + H2O. It participates in metabolic intermediate biosynthesis; chorismate biosynthesis; chorismate from D-erythrose 4-phosphate and phosphoenolpyruvate: step 3/7. Catalyzes a trans-dehydration via an enolate intermediate. The chain is 3-dehydroquinate dehydratase (aroQ) from Streptomyces coelicolor (strain ATCC BAA-471 / A3(2) / M145).